Reading from the N-terminus, the 82-residue chain is Small ribosomal subunit protein bS16 (82 aa).

The protein belongs to the bacterial ribosomal protein bS16 family.

The sequence is that of Small ribosomal subunit protein bS16 from Rippkaea orientalis (strain PCC 8801 / RF-1) (Cyanothece sp. (strain PCC 8801)).